The chain runs to 425 residues: Dihydroorotase (425 aa).

His56 and His58 together coordinate Zn(2+). Substrate contacts are provided by residues His58–Arg60 and Asn90. Residues Asp148, His175, and His228 each coordinate Zn(2+). Asn274 serves as a coordination point for substrate. Asp301 is a binding site for Zn(2+). Asp301 is an active-site residue. Substrate is bound by residues His305 and Phe319 to Gly320.

The protein belongs to the metallo-dependent hydrolases superfamily. DHOase family. Class I DHOase subfamily. Requires Zn(2+) as cofactor.

The catalysed reaction is (S)-dihydroorotate + H2O = N-carbamoyl-L-aspartate + H(+). Its pathway is pyrimidine metabolism; UMP biosynthesis via de novo pathway; (S)-dihydroorotate from bicarbonate: step 3/3. In terms of biological role, catalyzes the reversible cyclization of carbamoyl aspartate to dihydroorotate. The sequence is that of Dihydroorotase from Lactobacillus delbrueckii subsp. bulgaricus (strain ATCC 11842 / DSM 20081 / BCRC 10696 / JCM 1002 / NBRC 13953 / NCIMB 11778 / NCTC 12712 / WDCM 00102 / Lb 14).